A 125-amino-acid chain; its full sequence is Fumarate reductase subunit D (125 aa).

A run of 3 helical transmembrane segments spans residues 30-50 (FAMI…MGVI), 60-80 (VVSF…LALP), and 105-125 (IACY…IFML).

This sequence belongs to the FrdD family. Part of an enzyme complex containing four subunits: a flavoprotein (FrdA), an iron-sulfur protein (FrdB), and two hydrophobic anchor proteins (FrdC and FrdD).

It is found in the cell inner membrane. Its function is as follows. Anchors the catalytic components of the fumarate reductase complex to the cell membrane, binds quinones. In Vibrio vulnificus (strain YJ016), this protein is Fumarate reductase subunit D.